The chain runs to 346 residues: Biotin synthase (346 aa).

Residues 40–264 (NEVQVSTLLS…MMPHSHVRLS (225 aa)) form the Radical SAM core domain. Residues C55, C59, and C62 each coordinate [4Fe-4S] cluster. [2Fe-2S] cluster-binding residues include C99, C130, C190, and R262.

This sequence belongs to the radical SAM superfamily. Biotin synthase family. Homodimer. Requires [4Fe-4S] cluster as cofactor. [2Fe-2S] cluster is required as a cofactor.

It catalyses the reaction (4R,5S)-dethiobiotin + (sulfur carrier)-SH + 2 reduced [2Fe-2S]-[ferredoxin] + 2 S-adenosyl-L-methionine = (sulfur carrier)-H + biotin + 2 5'-deoxyadenosine + 2 L-methionine + 2 oxidized [2Fe-2S]-[ferredoxin]. It participates in cofactor biosynthesis; biotin biosynthesis; biotin from 7,8-diaminononanoate: step 2/2. Catalyzes the conversion of dethiobiotin (DTB) to biotin by the insertion of a sulfur atom into dethiobiotin via a radical-based mechanism. The sequence is that of Biotin synthase from Colwellia psychrerythraea (strain 34H / ATCC BAA-681) (Vibrio psychroerythus).